A 250-amino-acid polypeptide reads, in one-letter code: Glutathione transferase omega-1 (250 aa).

Positions 21–101 (SKGSFRVYNM…YLDDAFPETR (81 aa)) constitute a GST N-terminal domain. Cysteine 33 functions as the Nucleophile in the catalytic mechanism. Residues lysine 60 and 85–86 (ES) each bind glutathione. The region spanning 106–234 (DPYEKVQQKL…TQSLEHGAAF (129 aa)) is the GST C-terminal domain.

This sequence belongs to the GST superfamily. Omega family. In terms of assembly, homodimer. In terms of tissue distribution, expressed in the intestinal cells.

The protein resides in the cytoplasm. It carries out the reaction RX + glutathione = an S-substituted glutathione + a halide anion + H(+). It catalyses the reaction L-dehydroascorbate + 2 glutathione = glutathione disulfide + L-ascorbate. The enzyme catalyses methylarsonate + 2 glutathione + H(+) = methylarsonous acid + glutathione disulfide + H2O. Its function is as follows. Exhibits glutathione-dependent thiol transferase activity. Has dehydroascorbate reductase activity and may contribute to the recycling of ascorbic acid. Participates in the biotransformation of inorganic arsenic and reduces monomethylarsonic acid (MMA). Protects against environmental stress and oxidative stress. The sequence is that of Glutathione transferase omega-1 (gsto-1) from Caenorhabditis elegans.